The following is a 739-amino-acid chain: Elongation factor 2 (739 aa).

The tr-type G domain maps to Arg19–Ile261. GTP-binding positions include Ala28–Thr35, Asp94–His98, and Asn148–Asp151. Position 603 is a diphthamide (His603).

It belongs to the TRAFAC class translation factor GTPase superfamily. Classic translation factor GTPase family. EF-G/EF-2 subfamily.

It localises to the cytoplasm. Catalyzes the GTP-dependent ribosomal translocation step during translation elongation. During this step, the ribosome changes from the pre-translocational (PRE) to the post-translocational (POST) state as the newly formed A-site-bound peptidyl-tRNA and P-site-bound deacylated tRNA move to the P and E sites, respectively. Catalyzes the coordinated movement of the two tRNA molecules, the mRNA and conformational changes in the ribosome. This chain is Elongation factor 2, found in Korarchaeum cryptofilum (strain OPF8).